A 348-amino-acid chain; its full sequence is 4-hydroxy-3-methylbut-2-en-1-yl diphosphate synthase (flavodoxin) (348 aa).

Residues cysteine 263, cysteine 266, cysteine 298, and glutamate 305 each contribute to the [4Fe-4S] cluster site.

This sequence belongs to the IspG family. The cofactor is [4Fe-4S] cluster.

It catalyses the reaction (2E)-4-hydroxy-3-methylbut-2-enyl diphosphate + oxidized [flavodoxin] + H2O + 2 H(+) = 2-C-methyl-D-erythritol 2,4-cyclic diphosphate + reduced [flavodoxin]. It participates in isoprenoid biosynthesis; isopentenyl diphosphate biosynthesis via DXP pathway; isopentenyl diphosphate from 1-deoxy-D-xylulose 5-phosphate: step 5/6. Functionally, converts 2C-methyl-D-erythritol 2,4-cyclodiphosphate (ME-2,4cPP) into 1-hydroxy-2-methyl-2-(E)-butenyl 4-diphosphate. This Dehalococcoides mccartyi (strain ATCC BAA-2100 / JCM 16839 / KCTC 5957 / BAV1) protein is 4-hydroxy-3-methylbut-2-en-1-yl diphosphate synthase (flavodoxin).